Reading from the N-terminus, the 318-residue chain is NADH-ubiquinone oxidoreductase chain 1 (318 aa).

The next 8 helical transmembrane spans lie at 2 to 22 (FTIN…FLTL), 70 to 90 (MFII…VPLP), 100 to 120 (LGVL…LWSG), 146 to 166 (LAII…STLI), 171 to 191 (HLWL…STLA), 222 to 242 (LFFM…TILF), 253 to 273 (ELYT…FLWI), and 294 to 314 (LPLT…MSSI).

Belongs to the complex I subunit 1 family.

Its subcellular location is the mitochondrion inner membrane. The enzyme catalyses a ubiquinone + NADH + 5 H(+)(in) = a ubiquinol + NAD(+) + 4 H(+)(out). In terms of biological role, core subunit of the mitochondrial membrane respiratory chain NADH dehydrogenase (Complex I) that is believed to belong to the minimal assembly required for catalysis. Complex I functions in the transfer of electrons from NADH to the respiratory chain. The immediate electron acceptor for the enzyme is believed to be ubiquinone. The protein is NADH-ubiquinone oxidoreductase chain 1 (MT-ND1) of Rhinoceros unicornis (Greater Indian rhinoceros).